We begin with the raw amino-acid sequence, 748 residues long: Holliday junction recognition protein (748 aa).

5 positions are modified to phosphoserine: S123, S140, S185, S201, and S211. Positions 191–226 are disordered; sequence PGYCSRISRKSPGDPAKPASSPREWDPLHPSSTDMA. Residue K354 forms a Glycyl lysine isopeptide (Lys-Gly) (interchain with G-Cter in SUMO2) linkage. 3 positions are modified to phosphoserine: S412, S448, and S473. A Phosphoserine; by PKB/AKT1 modification is found at S486. Phosphoserine is present on S496. The disordered stretch occupies residues 512-574; sequence GRCLPKSDSS…PDKEVPGHGR (63 aa). The span at 524 to 562 shows a compositional bias: polar residues; it reads LPKTNPTHSATRPQQTSDLHVQGNSSGIFRKSVSPSKTL. The span at 565–574 shows a compositional bias: basic and acidic residues; the sequence is PDKEVPGHGR. Glycyl lysine isopeptide (Lys-Gly) (interchain with G-Cter in SUMO2) cross-links involve residues K581 and K586. S595 and S642 each carry phosphoserine. Residues 670–748 form a disordered region; the sequence is RDGTRDHQFP…MLEKLETKSV (79 aa). Polar residues predominate over residues 688 to 699; that stretch reads PQGSGRQGNSLG. The span at 721-748 shows a compositional bias: basic and acidic residues; the sequence is SEERGENTSYRMEEKSDFMLEKLETKSV.

In terms of assembly, interacts with CENPA (via CATD domain); the interaction is direct and specific for CENPA since it does not interact with H3.1- or H3.3-containing nucleosomes. Heterotrimer composed of HJURP, CENPA and histone H4, where HJURP interacts with the dimer formed by CENPA and histone H4 and prevents tetramerization of CENPA and H4. Identified in a centromere complex containing histones H2A, H2B and H4, and at least CENPA, CENPB, CENPC, CENPT, CENPN, HJURP, SUPT16H, SSRP1 and RSF1. Interacts with 14-3-3 family members in a phosphorylation-dependent manner. Interacts with MSH5 and NBN. As to expression, according to PubMed:17256767, highly expressed in the thymus with lower levels in the placenta, small intestine, liver, skeletal muscle, and colon. According to PubMed:17823411, highly expressed in testis, and at a relatively lower level in thymus and bone marrow. Significantly overexpressed in many lung cancer samples, compared with normal lung.

It localises to the nucleus. Its subcellular location is the nucleolus. It is found in the chromosome. The protein localises to the centromere. Centromeric protein that plays a central role in the incorporation and maintenance of histone H3-like variant CENPA at centromeres. Acts as a specific chaperone for CENPA and is required for the incorporation of newly synthesized CENPA molecules into nucleosomes at replicated centromeres. Prevents CENPA-H4 tetramerization and prevents premature DNA binding by the CENPA-H4 tetramer. Directly binds Holliday junctions. The chain is Holliday junction recognition protein (HJURP) from Homo sapiens (Human).